Here is a 439-residue protein sequence, read N- to C-terminus: Synaptotagmin-B (439 aa).

Residues 1–74 are Vesicular-facing; that stretch reads MQAEMNQSAE…KEKFMNELQK (74 aa). N-linked (GlcNAc...) asparagine glycosylation is found at asparagine 6 and asparagine 46. A helical membrane pass occupies residues 75–101; it reads IPLPPWALIAIAIVSGLLLLTCCLCIC. The Cytoplasmic portion of the chain corresponds to 102–439; the sequence is KKCCCKKKKN…EVDVALGLKK (338 aa). The tract at residues 113-155 is disordered; sequence KEKGKGKKNDINMKDVKGSGGNQDDDDAETGLTEGEDKEEEAK. The segment covering 119–129 has biased composition (basic and acidic residues); it reads KKNDINMKDVK. The segment covering 135–151 has biased composition (acidic residues); that stretch reads QDDDDAETGLTEGEDKE. The interval 153–399 is phospholipid binding; it reads EAKEEEKLGK…AIGKIFVGSN (247 aa). C2 domains lie at 159 to 278 and 290 to 423; these read KLGK…EEWR and KLGD…AQWH. Ca(2+)-binding residues include leucine 189, aspartate 190, aspartate 196, aspartate 248, phenylalanine 249, aspartate 250, serine 253, lysine 254, aspartate 256, aspartate 321, aspartate 327, aspartate 381, aspartate 383, and aspartate 389.

Belongs to the synaptotagmin family. Homodimer or homotrimer (possible). Requires Ca(2+) as cofactor. In terms of tissue distribution, spinal cord, brainstem, midbrain and electric organ.

The protein localises to the cytoplasmic vesicle. It localises to the secretory vesicle. Its subcellular location is the synaptic vesicle membrane. It is found in the synapse. May have a regulatory role in the membrane interactions during trafficking of synaptic vesicles at the active zone of the synapse. It binds acidic phospholipids with a specificity that requires the presence of both an acidic head group and a diacyl backbone. The protein is Synaptotagmin-B (P65-B) of Diplobatis ommata (Ocellated electric ray).